The sequence spans 127 residues: MSIPKELRYSQEHEWVRVEGNTVRIGITDFAQSELGDIVFVELPEVGAQLTANEPFGSVESVKTVSELYAPISGKVVAVNEELNDNPEYVNESPYDKAWMIVIEPSDLSEVDNLLTAEQYEQMINQD.

A Lipoyl-binding domain is found at 22-104; sequence TVRIGITDFA…YDKAWMIVIE (83 aa). N6-lipoyllysine is present on K63.

Belongs to the GcvH family. As to quaternary structure, the glycine cleavage system is composed of four proteins: P, T, L and H. The cofactor is (R)-lipoate.

In terms of biological role, the glycine cleavage system catalyzes the degradation of glycine. The H protein shuttles the methylamine group of glycine from the P protein to the T protein. Functionally, is also involved in protein lipoylation via its role as an octanoyl/lipoyl carrier protein intermediate. The sequence is that of Glycine cleavage system H protein from Anoxybacillus flavithermus (strain DSM 21510 / WK1).